A 377-amino-acid polypeptide reads, in one-letter code: Killer cell immunoglobulin-like receptor 2DL4 (377 aa).

The signal sequence occupies residues 1-21 (MSMSPTVIILACLGFFLDQSV). Over 22 to 242 (WAHVGGQDKP…FKTGIARHLH (221 aa)) the chain is Extracellular. 2 consecutive Ig-like C2-type domains span residues 44–104 (GGHV…HPHS) and 139–202 (GENV…FHGS). An intrachain disulfide couples Cys51 to Cys97. 2 N-linked (GlcNAc...) asparagine glycosylation sites follow: Asn141 and Asn175. A disulfide bond links Cys146 and Cys195. A helical transmembrane segment spans residues 243–263 (AVIRYSVAIILFTILPFFLLH). At 264–377 (RWCSKKKDAA…ASSNVPAAGI (114 aa)) the chain is on the cytoplasmic side. Residues 338-377 (PRALSPAHEHHSQALMGSSRETTALSQTQLASSNVPAAGI) are disordered. A compositionally biased stretch (polar residues) spans 352 to 377 (LMGSSRETTALSQTQLASSNVPAAGI).

It belongs to the immunoglobulin superfamily. Interacts with peptide-bound HLA-G-B2M heterotrimeric complex. Interacts with ARRB2. As to expression, expressed in decidual NK cells and innate lymphoid cell type I (ILC1). Expressed in a subset of peripheral NK cells.

Its subcellular location is the cell membrane. It localises to the early endosome membrane. In terms of biological role, receptor for non-classical major histocompatibility class Ib HLA-G molecules. Recognizes HLA-G in complex with B2M/beta-2 microglobulin and a nonamer self-peptide (peptide-bound HLA-G-B2M). In decidual NK cells, binds peptide-bound HLA-G-B2M complex and triggers NK cell senescence-associated secretory phenotype as a molecular switch to promote vascular remodeling and fetal growth in early pregnancy. May play a role in balancing tolerance and antiviral-immunity at maternal-fetal interface by keeping in check the effector functions of NK, CD8+ T cells and B cells. Upon interaction with peptide-bound HLA-G-B2M, initiates signaling from the endosomal compartment leading to downstream activation of PRKDC-XRCC5 and AKT1, and ultimately triggering NF-kappa-B-dependent pro-inflammatory response. The protein is Killer cell immunoglobulin-like receptor 2DL4 of Homo sapiens (Human).